The following is a 166-amino-acid chain: Large ribosomal subunit protein bL9 (166 aa).

This sequence belongs to the bacterial ribosomal protein bL9 family.

Its function is as follows. Binds to the 23S rRNA. This chain is Large ribosomal subunit protein bL9, found in Brachyspira hyodysenteriae (strain ATCC 49526 / WA1).